We begin with the raw amino-acid sequence, 407 residues long: Chorismate synthase (407 aa).

2 residues coordinate NADP(+): R40 and R46. Residues 135–137, 256–257, G300, 315–319, and R341 contribute to the FMN site; these read RAS, QA, and KPIST.

Belongs to the chorismate synthase family. As to quaternary structure, homotetramer. It depends on FMNH2 as a cofactor.

The catalysed reaction is 5-O-(1-carboxyvinyl)-3-phosphoshikimate = chorismate + phosphate. It functions in the pathway metabolic intermediate biosynthesis; chorismate biosynthesis; chorismate from D-erythrose 4-phosphate and phosphoenolpyruvate: step 7/7. Functionally, catalyzes the anti-1,4-elimination of the C-3 phosphate and the C-6 proR hydrogen from 5-enolpyruvylshikimate-3-phosphate (EPSP) to yield chorismate, which is the branch point compound that serves as the starting substrate for the three terminal pathways of aromatic amino acid biosynthesis. This reaction introduces a second double bond into the aromatic ring system. The polypeptide is Chorismate synthase (Mycobacterium leprae (strain Br4923)).